The sequence spans 291 residues: MAGSLSEIKAKIISTEKTSKITSAMRMVSSAKLVKSEQAARDFQIYASKIRQITTDLLKSELTIGSDNPMLVSRPVKKTGYIVITSDKGLVGGYNSKILKSVMDMITEYHADGDYEIISIGSVGSDFFKARGMNVAFELRGLADQPSFEQVRQIISQSVDMFVNEIFDELYVCYNHHVNSLTSQVRVQQMLPISDLVADEAAEEGVTGFELEPNRHDILDQLLPQFTESLIYGAIIDAKTAEHAAGMTAMQTATDNAKNVINDLTIQYNRARQAAITQEITEIVAGANALE.

This sequence belongs to the ATPase gamma chain family. In terms of assembly, F-type ATPases have 2 components, CF(1) - the catalytic core - and CF(0) - the membrane proton channel. CF(1) has five subunits: alpha(3), beta(3), gamma(1), delta(1), epsilon(1). CF(0) has three main subunits: a, b and c.

The protein resides in the cell membrane. In terms of biological role, produces ATP from ADP in the presence of a proton gradient across the membrane. The gamma chain is believed to be important in regulating ATPase activity and the flow of protons through the CF(0) complex. The polypeptide is ATP synthase gamma chain (Streptococcus pyogenes serotype M1).